Reading from the N-terminus, the 173-residue chain is MPRTQRNDNFIDKSFTVMADLILKLLPTNNQAKEAFAYYRDGMSAQADGEYAEALENYYEALNLEDDPNDRSYILYNIGLIHASNGEHDQALEYYHQALENNPRMPQALNNIAVIFHYRGEKAKETGNSRDANSYFDQAAEYWKQAISLAPNNYIEAQNWLKTTGRSNKEVFF.

3 TPR repeats span residues 35-68 (AFAY…EDDP), 72-105 (SYIL…NPRM), and 120-153 (GEKA…APNN).

This sequence belongs to the Ycf3 family.

It localises to the cellular thylakoid membrane. Essential for the assembly of the photosystem I (PSI) complex. May act as a chaperone-like factor to guide the assembly of the PSI subunits. This Trichodesmium erythraeum (strain IMS101) protein is Photosystem I assembly protein Ycf3.